Reading from the N-terminus, the 326-residue chain is Malate dehydrogenase (326 aa).

Residue 12 to 18 (GGTGQIA) coordinates NAD(+). Substrate contacts are provided by Arg93 and Arg99. Residues Asn106, Gln113, and 130–132 (VGN) each bind NAD(+). Substrate is bound by residues Asn132 and Arg163. Residue His188 is the Proton acceptor of the active site.

Belongs to the LDH/MDH superfamily. MDH type 2 family.

The catalysed reaction is (S)-malate + NAD(+) = oxaloacetate + NADH + H(+). Functionally, catalyzes the reversible oxidation of malate to oxaloacetate. The polypeptide is Malate dehydrogenase (Chlamydia muridarum (strain MoPn / Nigg)).